The primary structure comprises 212 residues: Transmembrane emp24 domain-containing protein p24delta7 (212 aa).

The N-terminal stretch at 1–22 (MNHRRSSIVLLILSILSPVTLS) is a signal peptide. The Lumenal portion of the chain corresponds to 23–179 (IRYELLSGHT…HNLNIATNSK (157 aa)). The GOLD domain occupies 32 to 147 (TKCISEEIHA…VETMEFEVKK (116 aa)). The stretch at 162-175 (LRDREEEMHNLNIA) forms a coiled coil. Residue R165 is modified to Omega-N-methylated arginine. A helical transmembrane segment spans residues 180–200 (MAWLSFVSLAVCLSVAGLQFW). Over 201–212 (HLKTFFQKKKLI) the chain is Cytoplasmic. Positions 205–206 (FF) match the COPII vesicle coat-binding motif. The COPI vesicle coat-binding motif lies at 205-212 (FFQKKKLI).

The protein belongs to the EMP24/GP25L family. As to quaternary structure, probably oligomerizes with other members of the EMP24/GP25L family. Associates with the COPI vesicle coat (coatomer). Associates with the COPII vesicle coat (coatomer).

Its subcellular location is the endoplasmic reticulum membrane. The protein resides in the golgi apparatus. The protein localises to the cis-Golgi network membrane. It is found in the golgi stack membrane. In terms of biological role, involved in vesicular protein trafficking. Mainly functions in the early secretory pathway. Thought to act as cargo receptor at the lumenal side for incorporation of secretory cargo molecules into transport vesicles and to be involved in vesicle coat formation at the cytoplasmic side. This is Transmembrane emp24 domain-containing protein p24delta7 from Arabidopsis thaliana (Mouse-ear cress).